Reading from the N-terminus, the 189-residue chain is ADP-ribosylation factor H (189 aa).

GTP is bound by residues 34 to 40, 75 to 79, and 134 to 137; these read DGAGKST, DVGGQ, and NKQD.

The protein belongs to the small GTPase superfamily. Arf family.

It localises to the golgi apparatus. Its function is as follows. GTP-binding protein that may be involved in protein trafficking. May modulate vesicle budding and uncoating within the Golgi apparatus. This chain is ADP-ribosylation factor H (arrH), found in Dictyostelium discoideum (Social amoeba).